Here is a 135-residue protein sequence, read N- to C-terminus: Large ribosomal subunit protein uL16c (135 aa).

The protein belongs to the universal ribosomal protein uL16 family. Part of the 50S ribosomal subunit.

It is found in the plastid. The protein localises to the chloroplast. This chain is Large ribosomal subunit protein uL16c, found in Vitis vinifera (Grape).